The following is a 678-amino-acid chain: NADPH--cytochrome P450 reductase (678 aa).

N-acetylglycine is present on Gly-2. Residues 2-22 (GDSNVDTGTTTSEMVAEEVSL) lie on the Lumenal side of the membrane. Residues 23–43 (FSATDMVLFSLIVGLLTYWFI) form a helical membrane-spanning segment. The Cytoplasmic segment spans residues 44–678 (FRKKKDEVPE…KGRYSLDVWS (635 aa)). A Phosphoserine modification is found at Ser-63. A Flavodoxin-like domain is found at 80–224 (IIVFYGSQTG…DFITWREQFW (145 aa)). FMN is bound by residues 86–91 (SQTGTA), 138–141 (ATYG), 173–182 (LGNKTYEHFN), and Asp-208. Residues 279-521 (KNPFLAVVTT…FVRKSQFRLP (243 aa)) enclose the FAD-binding FR-type domain. Arg-298 serves as a coordination point for NADP(+). Residues Arg-424, 454-457 (RYYS), 472-474 (CAV), Tyr-478, and 488-491 (GVAT) each bind FAD. NADP(+) contacts are provided by residues Thr-535, 596–597 (SR), 602–606 (KVYVQ), and Asp-639. Trp-677 contributes to the FAD binding site.

Belongs to the NADPH--cytochrome P450 reductase family. This sequence in the N-terminal section; belongs to the flavodoxin family. The protein in the C-terminal section; belongs to the flavoprotein pyridine nucleotide cytochrome reductase family. The cofactor is FAD. It depends on FMN as a cofactor.

The protein localises to the endoplasmic reticulum membrane. The catalysed reaction is 2 oxidized [cytochrome P450] + NADPH = 2 reduced [cytochrome P450] + NADP(+) + H(+). Its function is as follows. This enzyme is required for electron transfer from NADP to cytochrome P450 in microsomes. It can also provide electron transfer to heme oxygenase and cytochrome B5. The sequence is that of NADPH--cytochrome P450 reductase from Sus scrofa (Pig).